The sequence spans 449 residues: Nuclear hormone receptor family member nhr-43 (449 aa).

A DNA-binding region (nuclear receptor) is located at residues 44–122 (NIHCRVCERR…VGLNVDAVVG (79 aa)). NR C4-type zinc fingers lie at residues 47-68 (CRVCERRYDGSQHFGIDICRAC) and 84-105 (CRRGTNKCELNTVSRKTTCQKC). Over residues 125-142 (SPDHVKTTSRDESVKKED) the composition is skewed to basic and acidic residues. The segment at 125-154 (SPDHVKTTSRDESVKKEDEESDTGSEGKSC) is disordered. The NR LBD domain maps to 200–449 (NYNEFTKSRL…SDLNAYLYSI (250 aa)).

It is found in the nucleus. Ligand-activated transcription factor. Positively modulates expression of homeobox protein lin-39, perhaps by binding to the sequence motif 5'-TGAC-3' in regulatory regions of the lin-39 gene, acting in the embryo, and also in the vulval lineage. The protein is Nuclear hormone receptor family member nhr-43 of Caenorhabditis elegans.